Consider the following 474-residue polypeptide: Probable phenylalanine--tRNA ligase alpha subunit (474 aa).

The segment at 1–150 (MSLSQKILEL…KRKLIYQAKE (150 aa)) is contains the major tRNA-Phe binding sites. L-phenylalanine-binding positions include Thr-308, 350–352 (QVE), and Tyr-390. Mg(2+) is bound at residue Glu-392. An L-phenylalanine-binding site is contributed by Phe-416.

The protein belongs to the class-II aminoacyl-tRNA synthetase family. Phe-tRNA synthetase alpha subunit type 2 subfamily. As to quaternary structure, tetramer of two alpha and two beta subunits. Mg(2+) is required as a cofactor.

Its subcellular location is the cytoplasm. The enzyme catalyses tRNA(Phe) + L-phenylalanine + ATP = L-phenylalanyl-tRNA(Phe) + AMP + diphosphate + H(+). The polypeptide is Probable phenylalanine--tRNA ligase alpha subunit (Vairimorpha ceranae (strain BRL01) (Microsporidian parasite)).